We begin with the raw amino-acid sequence, 212 residues long: GTP cyclohydrolase 1 (212 aa).

Positions 103, 106, and 174 each coordinate Zn(2+).

This sequence belongs to the GTP cyclohydrolase I family. In terms of assembly, toroid-shaped homodecamer, composed of two pentamers of five dimers.

It carries out the reaction GTP + H2O = 7,8-dihydroneopterin 3'-triphosphate + formate + H(+). The protein operates within cofactor biosynthesis; 7,8-dihydroneopterin triphosphate biosynthesis; 7,8-dihydroneopterin triphosphate from GTP: step 1/1. The chain is GTP cyclohydrolase 1 from Caulobacter vibrioides (strain ATCC 19089 / CIP 103742 / CB 15) (Caulobacter crescentus).